A 251-amino-acid chain; its full sequence is MyoD family inhibitor (251 aa).

Disordered stretches follow at residues 1–64 (MSQV…PHDS), 84–167 (VTCQ…APAV), and 230–251 (RPKQ…GKEF). Residues 84–94 (VTCQPQGNPQG) are compositionally biased toward polar residues. Residues 138–154 (GSQAGRKSRGSARSASQ) show a composition bias toward low complexity.

This sequence belongs to the MDFI family. As to quaternary structure, interacts (via C-terminus) with AXIN1 and LEF1. Interacts with CCNT2. Interacts (via C-terminus) with Piezo channel composed of PIEZO1 or PIEZO2; the interaction prolongs Piezo channel inactivation. As to expression, in the embryo, highly expressed in the sclerotome. Also expressed in the notochord, neural tube, limb buds, heart, branchial arches and head mesenchyme. In the adult, highly expressed in skeletal muscle. Expressed at lower levels in most other tissues.

It is found in the nucleus. Its subcellular location is the cytoplasm. Functionally, inhibits the transactivation activity of the Myod family of myogenic factors and represses myogenesis. Acts by associating with Myod family members and retaining them in the cytoplasm by masking their nuclear localization signals. Can also interfere with the DNA-binding activity of Myod family members. Plays an important role in trophoblast and chondrogenic differentiation. Regulates the transcriptional activity of TCF7L1/TCF3 by interacting directly with Tcf7l1/Tcf3 and preventing it from binding DNA. Binds to the axin complex, resulting in an increase in the level of free beta-catenin. Affects axin regulation of the WNT and JNK signaling pathways. Regulates the activity of mechanosensitive Piezo channel. This is MyoD family inhibitor (Mdfi) from Mus musculus (Mouse).